The primary structure comprises 149 residues: Oligosaccharyltransferase complex subunit OSTC (149 aa).

Topologically, residues 1–32 (MESLYRVPFLVLECPNLKLKKPPWVHMPSAMT) are cytoplasmic. Residues 33–53 (VYALVVVSYFLITGGIIYDVI) traverse the membrane as a helical segment. The Extracellular segment spans residues 54-83 (VEPPSVGSVTDEHGHQRPVAFLAYRVNGQY). Residues 84–104 (IMEGLASSFLFTMGGLGFIIL) traverse the membrane as a helical segment. The Cytoplasmic portion of the chain corresponds to 105–117 (DRSNAPNIPKLNR). Residues 118-138 (FLLLFIGFVCVLLSFFMARVF) form a helical membrane-spanning segment. Residues 139 to 149 (MRMKLPGYLMG) lie on the Extracellular side of the membrane.

The protein belongs to the OSTC family. In terms of assembly, component of STT3A-containing oligosaccharyl transferase (OST-A) complex. STT3A-containing complex assembly occurs through the formation of 3 subcomplexes. Subcomplex 1 contains RPN1 and TMEM258, subcomplex 2 contains the STT3A-specific subunits STT3A, DC2/OSTC, and KCP2 as well as the core subunit OST4, and subcomplex 3 contains RPN2, DAD1, and OST48. The OST-A complex can form stable complexes with the Sec61 complex or with both the Sec61 and TRAP complexes. Interacts with PSEN1 and NCSTN; indicative for an association with the gamma-secretase complex.

The protein resides in the endoplasmic reticulum. It is found in the membrane. It functions in the pathway protein modification; protein glycosylation. Its function is as follows. Subunit of STT3A-containing oligosaccharyl transferase (OST-A) complex that catalyzes the initial transfer of a defined glycan (Glc(3)Man(9)GlcNAc(2) in eukaryotes) from the lipid carrier dolichol-pyrophosphate to an asparagine residue within an Asn-X-Ser/Thr consensus motif in nascent polypeptide chains, the first step in protein N-glycosylation. N-glycosylation occurs cotranslationally and the complex associates with the Sec61 complex at the channel-forming translocon complex that mediates protein translocation across the endoplasmic reticulum (ER). Within the OST-A complex, acts as an adapter that anchors the OST-A complex to the Sec61 complex. May be involved in N-glycosylation of APP (amyloid-beta precursor protein). Can modulate gamma-secretase cleavage of APP by enhancing endoprotelysis of PSEN1. The sequence is that of Oligosaccharyltransferase complex subunit OSTC from Bos taurus (Bovine).